A 32-amino-acid chain; its full sequence is Cathepsin B-like cysteine proteinase (32 aa).

A propeptide spans 1-22 (KPNYKRQFEPFSDELIHYINLE) (activation peptide).

This sequence belongs to the peptidase C1 family.

Thiol protease. The sequence is that of Cathepsin B-like cysteine proteinase from Fasciola hepatica (Liver fluke).